We begin with the raw amino-acid sequence, 531 residues long: Dimethylnonatriene synthase (531 aa).

A helical membrane pass occupies residues 6–26 (TMSVAMALAAAIFVVLCSVVA). C464 is a binding site for heme.

This sequence belongs to the cytochrome P450 family. It depends on heme as a cofactor.

The protein localises to the membrane. It catalyses the reaction (6E,10E)-geranyllinalool + reduced [NADPH--hemoprotein reductase] + O2 = (3E,7E)-4,8,12-trimethyltrideca 1,3,7,11-tetraene + but-3-en-2-one + oxidized [NADPH--hemoprotein reductase] + 2 H2O + H(+). It carries out the reaction (3S,6E)-nerolidol + reduced [NADPH--hemoprotein reductase] + O2 = (3E)-4,8-dimethylnona-1,3,7-triene + but-3-en-2-one + oxidized [NADPH--hemoprotein reductase] + 2 H2O + H(+). It functions in the pathway secondary metabolite biosynthesis; terpenoid biosynthesis. Functionally, involved in the biosynthesis of homoterpenes, attractants of herbivores parasitoids and predators (e.g. predatory mites and parasitoid wasps). Component of the volatile terpenes biosynthesis pathways. Converts mainly nerolidol to dimethylnonatriene (DMNT) and, to a lower extent, geranyllinalool to trimethyltridecatetraene (TMTT). This chain is Dimethylnonatriene synthase, found in Zea mays (Maize).